The sequence spans 1027 residues: A-factor-processing enzyme (1027 aa).

Position 118 (His-118) interacts with Zn(2+). Glu-121 acts as the Proton acceptor in catalysis. Zn(2+) contacts are provided by His-122 and Glu-199.

Belongs to the peptidase M16 family. It depends on Zn(2+) as a cofactor.

It localises to the membrane. With respect to regulation, inhibited by chelating agents like EDTA, TPEN and 1,1-phenanthroline, as well as NEM, free cysteine and DTT. Involved in the N-terminal endoproteolytic cleavage of the P2 precursor of the a-factor mating pheromone. Capable of proteolysing the established mammalian insulin-degrading enzymes (IDEs) substrates amyloid-beta peptide and insulin B-chain. The polypeptide is A-factor-processing enzyme (STE23) (Saccharomyces cerevisiae (strain ATCC 204508 / S288c) (Baker's yeast)).